We begin with the raw amino-acid sequence, 381 residues long: E3 ubiquitin-protein ligase RNF13 (381 aa).

The signal sequence occupies residues 1-34 (MLLSIGMLMLSATQIYTIVTVQLFAFLNLLPVEA). Topologically, residues 35 to 182 (DILAYNFENG…IPEFSLPLEY (148 aa)) are lumenal. Residues 64-160 (LKGFLINSKP…GEASANSLKE (97 aa)) form the PA domain. A glycan (N-linked (GlcNAc...) asparagine) is linked at N88. A helical membrane pass occupies residues 183–203 (YLIPFLIIVGICLILIVIFMI). Residues 204-381 (TKFVQDRHRA…ERDYRVTNTV (178 aa)) are Cytoplasmic-facing. The RING-type; atypical zinc finger occupies 240-282 (CAICLDEYEDGDKLRILPCSHAYHCKCVDPWLTKTKKTCPVCK). Residues 285-381 (VVPSQGDSDS…ERDYRVTNTV (97 aa)) are disordered. Acidic residues-rich tracts occupy residues 292-305 (SDSETDSSQEENEV) and 339-353 (SEYEEDDNDNIDSSD). Residues 370 to 381 (NDERDYRVTNTV) are compositionally biased toward basic and acidic residues.

In terms of tissue distribution, widely expressed (at protein level). Lowest levels in the liver, moderate levels in the heart, intestine and spleen, and high levels in skeletal muscle, kidney, proventriculus and brain. Also expressed in inner ear after noise exposure.

It localises to the endoplasmic reticulum membrane. The protein localises to the late endosome membrane. Its subcellular location is the lysosome membrane. It is found in the nucleus inner membrane. It carries out the reaction S-ubiquitinyl-[E2 ubiquitin-conjugating enzyme]-L-cysteine + [acceptor protein]-L-lysine = [E2 ubiquitin-conjugating enzyme]-L-cysteine + N(6)-ubiquitinyl-[acceptor protein]-L-lysine.. It participates in protein modification; protein ubiquitination. E3 ubiquitin-protein ligase that regulates cell proliferation. Involved in apoptosis regulation. Mediates ER stress-induced activation of JNK signaling pathway and apoptosis by promoting ERN1 activation and splicing of XBP1 mRNA. In Gallus gallus (Chicken), this protein is E3 ubiquitin-protein ligase RNF13.